Consider the following 263-residue polypeptide: Endonuclease 8 (263 aa).

Proline 2 serves as the catalytic Schiff-base intermediate with DNA. Glutamate 3 (proton donor) is an active-site residue. Lysine 53 acts as the Proton donor; for beta-elimination activity in catalysis. Residues glutamine 70, arginine 125, and asparagine 169 each contribute to the DNA site. An FPG-type zinc finger spans residues lysine 229–lysine 263. Catalysis depends on arginine 253, which acts as the Proton donor; for delta-elimination activity.

The protein belongs to the FPG family. Requires Zn(2+) as cofactor.

It catalyses the reaction 2'-deoxyribonucleotide-(2'-deoxyribose 5'-phosphate)-2'-deoxyribonucleotide-DNA = a 3'-end 2'-deoxyribonucleotide-(2,3-dehydro-2,3-deoxyribose 5'-phosphate)-DNA + a 5'-end 5'-phospho-2'-deoxyribonucleoside-DNA + H(+). Functionally, involved in base excision repair of DNA damaged by oxidation or by mutagenic agents. Acts as a DNA glycosylase that recognizes and removes damaged bases. Has a preference for oxidized pyrimidines, such as thymine glycol, 5,6-dihydrouracil and 5,6-dihydrothymine. Has AP (apurinic/apyrimidinic) lyase activity and introduces nicks in the DNA strand. Cleaves the DNA backbone by beta-delta elimination to generate a single-strand break at the site of the removed base with both 3'- and 5'-phosphates. The sequence is that of Endonuclease 8 from Salmonella typhi.